The chain runs to 37 residues: Cytochrome b6-f complex subunit 5 (37 aa).

Residues 5–25 (LLSGIVLGLVPVTIAGLFVTA) form a helical membrane-spanning segment.

This sequence belongs to the PetG family. The 4 large subunits of the cytochrome b6-f complex are cytochrome b6, subunit IV (17 kDa polypeptide, PetD), cytochrome f and the Rieske protein, while the 4 small subunits are PetG, PetL, PetM and PetN. The complex functions as a dimer.

The protein localises to the plastid. It is found in the chloroplast thylakoid membrane. Component of the cytochrome b6-f complex, which mediates electron transfer between photosystem II (PSII) and photosystem I (PSI), cyclic electron flow around PSI, and state transitions. PetG is required for either the stability or assembly of the cytochrome b6-f complex. This chain is Cytochrome b6-f complex subunit 5, found in Chlorella vulgaris (Green alga).